A 303-amino-acid polypeptide reads, in one-letter code: Protoheme IX farnesyltransferase 1 (303 aa).

9 helical membrane-spanning segments follow: residues 18 to 38, 42 to 62, 91 to 111, 114 to 134, 139 to 159, 169 to 189, 213 to 233, 235 to 255, and 274 to 294; these read PGIIMGNLISVAGGFLLAAQG, LTLMFATMIGLSLVVASGCAV, AVLSFGIGLGIIGFAMLAIFT, LAVLFAAIGYVVYVGVYSLYM, VYGTLVGSFSGAVPPVVGYCA, VILLLMFSLWQMPHSYAIAIF, LHIVLYIAVFAVVSALLPLAG, TGIAFMAVTFATSLWWLAMAL, and FSIITITALSVTMALDFQVVA.

This sequence belongs to the UbiA prenyltransferase family. Protoheme IX farnesyltransferase subfamily.

Its subcellular location is the cell inner membrane. The enzyme catalyses heme b + (2E,6E)-farnesyl diphosphate + H2O = Fe(II)-heme o + diphosphate. It functions in the pathway porphyrin-containing compound metabolism; heme O biosynthesis; heme O from protoheme: step 1/1. Functionally, converts heme B (protoheme IX) to heme O by substitution of the vinyl group on carbon 2 of heme B porphyrin ring with a hydroxyethyl farnesyl side group. In Shewanella frigidimarina (strain NCIMB 400), this protein is Protoheme IX farnesyltransferase 1.